We begin with the raw amino-acid sequence, 307 residues long: uncharacterized protein (307 aa).

A helical membrane pass occupies residues 12–34 (LLAFLLALIMIGSVFAYMLSGGS).

The protein resides in the membrane. This is an uncharacterized protein from Archaeoglobus fulgidus (strain ATCC 49558 / DSM 4304 / JCM 9628 / NBRC 100126 / VC-16).